The chain runs to 379 residues: MKFKLKTTSGTARRGEMTFSRPQGEFTVQTPAFMPVGTYGTVKGMTPEEVRATGAEILLGNTFHLWLRPGQEVMRKHGDLHDFMQWHRPILTDSGGFQVFSLGKLRKITEEGVKFQNPINGERIFLSPEKSMEIQYDLGSDIVMIFDECTPYPATFDYAKKSMEMSLRWAQRSRDRFDELGNKNALFGIVQGGTFEELRKVSAEGLVDIGFDGYAVGGLAVGEPKEEMHRILEFTTPLLPADKPRYLMGVGKPEDLVEGVRRGIDMFDCVMPTRNARNGHLFVTDGIVKIRNAKYRDDTSALDPHCDCYTCRHYTKSYLYHLDKCGEILGARLNTIHNLRYYQRLMEEIRQAIEEDRFDDFVVEFYTRMGKEVPPLQKP.

The active-site Proton acceptor is aspartate 93. Substrate is bound by residues 93 to 97 (DSGGF), aspartate 147, glutamine 191, and glycine 218. The segment at 249–255 (GVGKPED) is RNA binding. Catalysis depends on aspartate 268, which acts as the Nucleophile. The interval 273–277 (TRNAR) is RNA binding; important for wobble base 34 recognition. Residues cysteine 306, cysteine 308, cysteine 311, and histidine 337 each coordinate Zn(2+).

This sequence belongs to the queuine tRNA-ribosyltransferase family. In terms of assembly, homodimer. Within each dimer, one monomer is responsible for RNA recognition and catalysis, while the other monomer binds to the replacement base PreQ1. Requires Zn(2+) as cofactor.

It catalyses the reaction 7-aminomethyl-7-carbaguanine + guanosine(34) in tRNA = 7-aminomethyl-7-carbaguanosine(34) in tRNA + guanine. The protein operates within tRNA modification; tRNA-queuosine biosynthesis. In terms of biological role, catalyzes the base-exchange of a guanine (G) residue with the queuine precursor 7-aminomethyl-7-deazaguanine (PreQ1) at position 34 (anticodon wobble position) in tRNAs with GU(N) anticodons (tRNA-Asp, -Asn, -His and -Tyr). Catalysis occurs through a double-displacement mechanism. The nucleophile active site attacks the C1' of nucleotide 34 to detach the guanine base from the RNA, forming a covalent enzyme-RNA intermediate. The proton acceptor active site deprotonates the incoming PreQ1, allowing a nucleophilic attack on the C1' of the ribose to form the product. After dissociation, two additional enzymatic reactions on the tRNA convert PreQ1 to queuine (Q), resulting in the hypermodified nucleoside queuosine (7-(((4,5-cis-dihydroxy-2-cyclopenten-1-yl)amino)methyl)-7-deazaguanosine). In Actinobacillus succinogenes (strain ATCC 55618 / DSM 22257 / CCUG 43843 / 130Z), this protein is Queuine tRNA-ribosyltransferase.